The following is a 370-amino-acid chain: Glutamine synthetase (370 aa).

Residues 23 to 102 form the GS beta-grasp domain; that stretch reads VLAEYVWIDA…VLTECWNNDG (80 aa). A disordered region spans residues 40–69; it reads CKTLDKKPSSVEDLPEWNFDGSSTGQAPGH. The region spanning 109 to 370 is the GS catalytic domain; it reads HRHESAKLMK…FKEYARESSD (262 aa).

It belongs to the glutamine synthetase family. In terms of assembly, homooctamer.

It is found in the cytoplasm. The catalysed reaction is L-glutamate + NH4(+) + ATP = L-glutamine + ADP + phosphate + H(+). This is Glutamine synthetase (GLN1) from Debaryomyces hansenii (strain ATCC 36239 / CBS 767 / BCRC 21394 / JCM 1990 / NBRC 0083 / IGC 2968) (Yeast).